Reading from the N-terminus, the 308-residue chain is Elongation factor Ts (308 aa).

Residues 80–83 are involved in Mg(2+) ion dislocation from EF-Tu; it reads TDFV.

Belongs to the EF-Ts family.

It localises to the cytoplasm. Its function is as follows. Associates with the EF-Tu.GDP complex and induces the exchange of GDP to GTP. It remains bound to the aminoacyl-tRNA.EF-Tu.GTP complex up to the GTP hydrolysis stage on the ribosome. This is Elongation factor Ts from Allorhizobium ampelinum (strain ATCC BAA-846 / DSM 112012 / S4) (Agrobacterium vitis (strain S4)).